Consider the following 455-residue polypeptide: Histone chaperone RTT106 (455 aa).

Serine 2 carries the N-acetylserine modification. The tract at residues 2–67 (SKLFLDELPE…SSDLLKTDEI (66 aa)) is dimeric region. PH domains are found at residues 68-200 (SETN…GFKI) and 217-301 (INSF…VKRK). Positions 68–301 (SETNTIFKLE…AKIDDYVKRK (234 aa)) are double PH domain. The segment covering 305–314 (DKSMSEELKA) has biased composition (basic and acidic residues). The disordered stretch occupies residues 305–455 (DKSMSEELKA…DEDGSGVEYD (151 aa)). A compositionally biased stretch (polar residues) spans 319-339 (KGQATDGTADQPSILQEATRQ). Composition is skewed to acidic residues over residues 350–366 (SDDD…ESDL) and 376–395 (DGAE…DEEE). Polar residues predominate over residues 402–418 (ALNRDNSFASINGQPEQ). Phosphoserine occurs at positions 408 and 411. A compositionally biased stretch (basic and acidic residues) spans 420-429 (LQYKEFKEPL). Residues 430-455 (ELEDIPIEIDNDDDEDDEDGSGVEYD) are compositionally biased toward acidic residues. The residue at position 450 (serine 450) is a Phosphoserine.

This sequence belongs to the RTT106 family. Homodimers (via the N-terminal domain). Interacts with the SWI/SNF complex. Interacts with the RSC complex. Interacts with the HIR complex. Interacts with the CAF-1 complex. Interacts with RLF2. Interacts with SIR4. Interacts with YTA7. Interacts with CAC2. Interacts with HPC2. Interacts with HIR2. Interacts with MSI1. Interacts with HIR1. Interacts with histone H3. Interacts with histone H4.

It localises to the nucleus. The protein localises to the chromosome. Its function is as follows. Histones H3 and H4 chaperone involved in the nucleosome formation and heterochromatin silencing. Required for the deposition of H3K56ac-carrying H3-H4 complex onto newly-replicated DNA. Plays a role in the transcriptional regulation of the cell-cycle dependent histone genes by directly recruiting the SWI/SNF and RSC chromatin remodeling complexes to the histone genes in a cell cycle dependent manner. In cooperation with HIR and ASF1, creates a repressive structure at the core histone gene promoter and contributes to their repression outside of S phase. Involved in regulation of Ty1 transposition. This is Histone chaperone RTT106 from Saccharomyces cerevisiae (strain ATCC 204508 / S288c) (Baker's yeast).